Reading from the N-terminus, the 72-residue chain is Small proline-rich protein 2E (72 aa).

Low complexity predominate over residues 1–11; sequence MSYQQQQCKQP. The interval 1–20 is disordered; sequence MSYQQQQCKQPCQPPPVCPT. Tandem repeats lie at residues 21–29, 30–38, and 39–47. The segment at 21–47 is 3 X 9 AA tandem repeats of P-K-C-P-[EQ]-P-C-P-P; it reads PKCPEPCPPPKCPEPCPPPKCPQPCPP. The interval 42–72 is disordered; the sequence is PQPCPPQQCQQKCPPVTPSPPCQPKCPPKSK. Residues 56–72 show a composition bias toward pro residues; the sequence is PVTPSPPCQPKCPPKSK.

The protein belongs to the cornifin (SPRR) family.

The protein resides in the cytoplasm. In terms of biological role, cross-linked envelope protein of keratinocytes. It is a keratinocyte protein that first appears in the cell cytosol, but ultimately becomes cross-linked to membrane proteins by transglutaminase. All that results in the formation of an insoluble envelope beneath the plasma membrane. This Homo sapiens (Human) protein is Small proline-rich protein 2E (SPRR2E).